A 759-amino-acid chain; its full sequence is Tripartite motif-containing protein 46 (759 aa).

The tract at residues 1–166 (MAEGEDMQTF…VERYRQSVSV (166 aa)) is required for proximal axon localization, axon formation and migration. Residues 33–59 (CPVCQEMYKQPLVLPCTHNVCQACARE) form an RING-type 1; degenerate zinc finger. The interval 67–98 (IGHGGDPSSEPTSPASTPSTRSPRLSRRTLPK) is disordered. Positions 73–89 (PSSEPTSPASTPSTRSP) are enriched in low complexity. The segment at 172–231 (CQLCKPPPLEATKGCTECRATFCNECFKLFHPWGTQKAQHEPTLPTLSFRPKGLMCPDHK) adopts an RING-type 2; degenerate zinc-finger fold. A B box-type zinc finger spans residues 222–263 (PKGLMCPDHKEEVTHYCKTCQRLVCQLCRVRRTHSGHKITPV). Zn(2+) contacts are provided by cysteine 227, histidine 230, cysteine 249, and histidine 255. A coiled-coil region spans residues 322 to 400 (AVLEEKRASL…RATEALQTFR (79 aa)). Serine 330 carries the phosphoserine modification. One can recognise a COS domain in the interval 370–427 (LKETDQPCFVQAAKQLHNRIARATEALQTFRPAASSSFRHCQLDVGREMKLLTELSFL). The interval 411–429 (QLDVGREMKLLTELSFLRV) is required for microtubule association, proximal axon localization and axon formation. Positions 429 to 528 (VPEAPVIDTQ…EDVHLHTPPA (100 aa)) constitute a Fibronectin type-III domain. Positions 526–747 (PPAPVLHFFL…LQEPVGTKPE (222 aa)) constitute a B30.2/SPRY domain. At serine 627 the chain carries Phosphoserine.

Belongs to the TRIM/RBCC family. In terms of assembly, interacts with TUBB3 and TUBA4A. Expressed in the central nervous system, including pyramidal neurons and interneurons in the cortex and hippocampus and all neuronal cell types in the cerebral and cerebellar cortex, and in the peripheral nervous system, including the dorsal root ganglion neurons.

It localises to the cell projection. It is found in the axon. The protein localises to the cytoplasm. Its subcellular location is the cytoskeleton. In terms of biological role, microtubule-associated protein that is involved in the formation of parallel microtubule bundles linked by cross-bridges in the proximal axon. Required for the uniform orientation and maintenance of the parallel microtubule fascicles, which are important for efficient cargo delivery and trafficking in axons. Thereby also required for proper axon formation, the establishment of neuronal polarity and proper neuronal migration. This Mus musculus (Mouse) protein is Tripartite motif-containing protein 46 (Trim46).